The following is a 153-amino-acid chain: Aspartate carbamoyltransferase regulatory chain (153 aa).

Residues cysteine 109, cysteine 114, cysteine 138, and cysteine 141 each contribute to the Zn(2+) site.

Belongs to the PyrI family. In terms of assembly, contains catalytic and regulatory chains. Zn(2+) is required as a cofactor.

Functionally, involved in allosteric regulation of aspartate carbamoyltransferase. The protein is Aspartate carbamoyltransferase regulatory chain of Salmonella paratyphi A (strain ATCC 9150 / SARB42).